The following is a 398-amino-acid chain: Secreted aspartic protease 3 (398 aa).

The signal sequence occupies residues 1 to 18 (MFLKNIFIALAIALLADA). Residues 19–58 (TPTTFNNSPGFVALNFDVIKTHKNVTGPQGEINTNVNVKR) constitute a propeptide, activation peptide. An N-linked (GlcNAc...) asparagine glycan is attached at N42. The region spanning 72–384 (YASDITVGSN…DLDDNEISLA (313 aa)) is the Peptidase A1 domain. The active site involves D90. Residue 90-92 (DTG) coordinates pepstatin A. The span at 103 to 112 (VSCQAGQGQD) shows a compositional bias: polar residues. The segment at 103-139 (VSCQAGQGQDPNFCKNEGTYSPSSSSSSQNLNSPFSI) is disordered. The cysteines at positions 105 and 116 are disulfide-linked. Low complexity predominate over residues 123–138 (SPSSSSSSQNLNSPFS). 140–143 (EYGD) provides a ligand contact to pepstatin A. Residues H188, D248, H254, and D270 each contribute to the Zn(2+) site. The active site involves D274. Residue 274–278 (DSGTT) participates in pepstatin A binding. A disulfide bridge links C312 with C350. N-linked (GlcNAc...) asparagine glycosylation occurs at N313.

This sequence belongs to the peptidase A1 family. Monomer.

It localises to the secreted. It catalyses the reaction Preferential cleavage at the carboxyl of hydrophobic amino acids, but fails to cleave 15-Leu-|-Tyr-16, 16-Tyr-|-Leu-17 and 24-Phe-|-Phe-25 of insulin B chain. Activates trypsinogen, and degrades keratin.. Its activity is regulated as follows. Inhibited by pepstatin A analogs. Its function is as follows. Secreted aspartic peptidases (SAPs) are a group of ten acidic hydrolases considered as key virulence factors. These enzymes supply the fungus with nutrient amino acids as well as are able to degrade the selected host's proteins involved in the immune defense. Induces host inflammatory cytokine production in a proteolytic activity-independent way. Moreover, acts toward human hemoglobin though limited proteolysis to generate a variety of antimicrobial hemocidins, enabling to compete with the other microorganisms of the same physiological niche using the microbicidal peptides generated from the host protein. Plays a key role in defense against host by cleaving histatin-5 (Hst 5), a peptide from human saliva that carries out fungicidal activity. The cleavage rate decreases in an order of SAP2 &gt; SAP9 &gt; SAP3 &gt; SAP7 &gt; SAP4 &gt; SAP1 &gt; SAP8. The first cleavage occurs between residues 'Lys-17' and 'His-18' of Hst 5, giving DSHAKRHHGYKRKFHEK and HHSHRGY peptides. Simultaneously, the DSHAKRHHGYKRK peptide is also formed. Further fragmentation by SAP3 results in DSHAKRHHGY and KRKFHEK products. The sequence is that of Secreted aspartic protease 3 from Candida albicans (strain SC5314 / ATCC MYA-2876) (Yeast).